The chain runs to 54 residues: Large ribosomal subunit protein bL32c (54 aa).

This sequence belongs to the bacterial ribosomal protein bL32 family.

The protein localises to the plastid. Its subcellular location is the chloroplast. This chain is Large ribosomal subunit protein bL32c, found in Panax ginseng (Korean ginseng).